A 675-amino-acid polypeptide reads, in one-letter code: UvrABC system protein B (675 aa).

A Helicase ATP-binding domain is found at 35–422 (EGVSDGLMFQ…ADNVVEQVVR (388 aa)). Residue 48-55 (GVTGSGKT) participates in ATP binding. The Beta-hairpin motif lies at 101 to 124 (YYDYYQPEAYVPTRDLFIEKDSSI). A Helicase C-terminal domain is found at 439–605 (QVDDLLGEIH…GVSKAVRELI (167 aa)). In terms of domain architecture, UVR spans 633–668 (AREIRRLEKLMMDHARNLEFEQAAAARDALNALKSR).

Belongs to the UvrB family. In terms of assembly, forms a heterotetramer with UvrA during the search for lesions. Interacts with UvrC in an incision complex.

The protein resides in the cytoplasm. In terms of biological role, the UvrABC repair system catalyzes the recognition and processing of DNA lesions. A damage recognition complex composed of 2 UvrA and 2 UvrB subunits scans DNA for abnormalities. Upon binding of the UvrA(2)B(2) complex to a putative damaged site, the DNA wraps around one UvrB monomer. DNA wrap is dependent on ATP binding by UvrB and probably causes local melting of the DNA helix, facilitating insertion of UvrB beta-hairpin between the DNA strands. Then UvrB probes one DNA strand for the presence of a lesion. If a lesion is found the UvrA subunits dissociate and the UvrB-DNA preincision complex is formed. This complex is subsequently bound by UvrC and the second UvrB is released. If no lesion is found, the DNA wraps around the other UvrB subunit that will check the other stand for damage. The chain is UvrABC system protein B from Bordetella bronchiseptica (strain ATCC BAA-588 / NCTC 13252 / RB50) (Alcaligenes bronchisepticus).